The sequence spans 95 residues: Protein Vpr (95 aa).

The homooligomerization stretch occupies residues 1 to 42; that stretch reads MERAPEDAGPQREPYNEWALELLEELKNEAVRHFPRIWLHGL. 3 positions are modified to phosphoserine; by host: serine 79, serine 93, and serine 95.

The protein belongs to the HIV-1 VPR protein family. In terms of assembly, homooligomer, may form homodimer. Interacts with p6-gag region of the Pr55 Gag precursor protein through a (Leu-X-X)4 motif near the C-terminus of the P6gag protein. Interacts with host UNG. May interact with host RAD23A/HHR23A. Interacts with host VPRBP/DCAF1, leading to hijack the CUL4A-RBX1-DDB1-DCAF1/VPRBP complex, mediating ubiquitination of host proteins such as TERT and ZGPAT and arrest of the cell cycle in G2 phase. Phosphorylated on several residues by host. These phosphorylations regulate VPR activity for the nuclear import of the HIV-1 pre-integration complex.

It localises to the virion. Its subcellular location is the host nucleus. The protein localises to the host extracellular space. Functionally, during virus replication, may deplete host UNG protein, and incude G2-M cell cycle arrest. Acts by targeting specific host proteins for degradation by the 26S proteasome, through association with the cellular CUL4A-DDB1 E3 ligase complex by direct interaction with host VPRPB/DCAF-1. Cell cycle arrest reportedly occurs within hours of infection and is not blocked by antiviral agents, suggesting that it is initiated by the VPR carried into the virion. Additionally, VPR induces apoptosis in a cell cycle dependent manner suggesting that these two effects are mechanistically linked. Detected in the serum and cerebrospinal fluid of AIDS patient, VPR may also induce cell death to bystander cells. During virus entry, plays a role in the transport of the viral pre-integration (PIC) complex to the host nucleus. This function is crucial for viral infection of non-dividing macrophages. May act directly at the nuclear pore complex, by binding nucleoporins phenylalanine-glycine (FG)-repeat regions. The polypeptide is Protein Vpr (Human immunodeficiency virus type 1 group N (isolate YBF30) (HIV-1)).